Reading from the N-terminus, the 107-residue chain is Large ribosomal subunit protein uL24 (107 aa).

The protein belongs to the universal ribosomal protein uL24 family. Part of the 50S ribosomal subunit.

Its function is as follows. One of two assembly initiator proteins, it binds directly to the 5'-end of the 23S rRNA, where it nucleates assembly of the 50S subunit. One of the proteins that surrounds the polypeptide exit tunnel on the outside of the subunit. This chain is Large ribosomal subunit protein uL24, found in Mesomycoplasma hyopneumoniae (strain 7448) (Mycoplasma hyopneumoniae).